A 386-amino-acid polypeptide reads, in one-letter code: MKDCSNGCSAPFAGERGSEEVAETFRAKDLIITPATVLKEKPDPDSLVFGATFTDHMLTVEWSSASGWEKPHIKPFGNLPIHPAASVLHYAVELFEGLKAFRGVDNKIRLFRPDLNMDRMCRSAVRTTLPMFDKEELLKCILQLLQIDQEWVPYSTSASLYIRPTFIGTEPSLGVKKPSKALLFVILSPVGPYFSSGSFTPVSLWANPKYIRAWKGGTGDCKMGGNYGASLLAQCEAVENGCQQVLWLYGKDNQITEVGTMNLFLYWINEDGEEELATPPLDGIILPGVTRQSILELAQQWGEFKVCERHLTMDDLATALEGNRVKEMFGSGTACVVCPVSDILYKGQMLHIPTMENGPKLASRILGKLTDIQYGRVESDWTIELP.

The residue at position 1 (M1) is an N-acetylmethionine. The residue at position 222 (K222) is an N6-(pyridoxal phosphate)lysine.

Belongs to the class-IV pyridoxal-phosphate-dependent aminotransferase family. Homodimer. It depends on pyridoxal 5'-phosphate as a cofactor. As to expression, expressed in brain and kidney. Overexpressed in MYC-induced brain tumors, lymphomas, as well as in a teratocarcinoma cell line.

The protein localises to the cytoplasm. It catalyses the reaction L-leucine + 2-oxoglutarate = 4-methyl-2-oxopentanoate + L-glutamate. The catalysed reaction is L-isoleucine + 2-oxoglutarate = (S)-3-methyl-2-oxopentanoate + L-glutamate. It carries out the reaction L-valine + 2-oxoglutarate = 3-methyl-2-oxobutanoate + L-glutamate. Functionally, catalyzes the first reaction in the catabolism of the essential branched chain amino acids leucine, isoleucine, and valine. The protein is Branched-chain-amino-acid aminotransferase, cytosolic (Bcat1) of Mus musculus (Mouse).